Consider the following 219-residue polypeptide: 7-carboxy-7-deazaguanine synthase (219 aa).

Substrate is bound by residues 22-24 (IQG) and R37. The Radical SAM core domain maps to 28–219 (LVGLPSVFIR…PQVHKCFDLK (192 aa)). [4Fe-4S] cluster contacts are provided by C41, C45, and C48. T81 is a substrate binding site. Residues G83 and 130-132 (SPK) contribute to the S-adenosyl-L-methionine site.

This sequence belongs to the radical SAM superfamily. 7-carboxy-7-deazaguanine synthase family. Homodimer. The cofactor is [4Fe-4S] cluster. Requires S-adenosyl-L-methionine as cofactor. It depends on Mg(2+) as a cofactor.

The catalysed reaction is 6-carboxy-5,6,7,8-tetrahydropterin + H(+) = 7-carboxy-7-deazaguanine + NH4(+). The protein operates within purine metabolism; 7-cyano-7-deazaguanine biosynthesis. In terms of biological role, catalyzes the complex heterocyclic radical-mediated conversion of 6-carboxy-5,6,7,8-tetrahydropterin (CPH4) to 7-carboxy-7-deazaguanine (CDG), a step common to the biosynthetic pathways of all 7-deazapurine-containing compounds. This chain is 7-carboxy-7-deazaguanine synthase, found in Aquifex aeolicus (strain VF5).